The chain runs to 1226 residues: Receptor-type tyrosine-protein phosphatase O (1226 aa).

Positions 1 to 29 are cleaved as a signal peptide; it reads MGHLPRGTLGGRRLLPLLGLFVLLKIVTT. One can recognise a Fibronectin type-III 1 domain in the interval 30 to 115; sequence FHVAVQDDNN…TKPSRSITVL (86 aa). Residues 30–832 are Extracellular-facing; it reads FHVAVQDDNN…VTEVNPNVVV (803 aa). Residues Asn-75, Asn-154, and Asn-227 are each glycosylated (N-linked (GlcNAc...) asparagine). The disordered stretch occupies residues 242-305; that stretch reads EPSGSFPEDS…PNSTDYESTS (64 aa). Basic and acidic residues predominate over residues 260–270; it reads IGRDRRFHFPE. Over residues 277 to 291 the composition is skewed to low complexity; sequence PSNVSSGSPPSNVSS. A glycan (N-linked (GlcNAc...) asparagine) is linked at Asn-279. Residues 296 to 305 are compositionally biased toward polar residues; the sequence is PNSTDYESTS. 5 Fibronectin type-III domains span residues 339 to 435, 445 to 541, 542 to 638, 641 to 734, and 735 to 827; these read RTEK…ISPT, KPQH…IVPT, GIKD…TISF, APVA…LEPA, and PPKS…TEVN. N-linked (GlcNAc...) asparagine glycosylation is found at Asn-471 and Asn-500. N-linked (GlcNAc...) asparagine glycans are attached at residues Asn-710, Asn-743, and Asn-800. The chain crosses the membrane as a helical span at residues 833 to 853; the sequence is ISVLAILSTLLIGLLLVTLVI. Residues 854 to 1226 lie on the Cytoplasmic side of the membrane; sequence LRKKHLQMAR…DVIYENVSKS (373 aa). Ser-875 is subject to Phosphoserine. In terms of domain architecture, Tyrosine-protein phosphatase spans 948-1205; it reads FSLQFEELKL…IFIHQCVQLM (258 aa). Residues Asp-1112, 1146-1152, and Gln-1190 contribute to the substrate site; that span reads CSAGVGR. Residue Cys-1146 is the Phosphocysteine intermediate of the active site. Tyr-1220 bears the Phosphotyrosine mark.

The protein belongs to the protein-tyrosine phosphatase family. Receptor class 3 subfamily. Interacts (phosphorylated form) with FYN and GRB2.

It localises to the membrane. The enzyme catalyses O-phospho-L-tyrosyl-[protein] + H2O = L-tyrosyl-[protein] + phosphate. In terms of biological role, possesses tyrosine phosphatase activity. Plays a role in regulating the glomerular pressure/filtration rate relationship through an effect on podocyte structure and function. In Mus musculus (Mouse), this protein is Receptor-type tyrosine-protein phosphatase O (Ptpro).